The following is a 539-amino-acid chain: MRPPVRASLGLLVAWAIGACVCAAAIETTWKHASAGDEVRLFALPAARPGAPPAKVVWELDPMAACGSLRPSWVSLRPPGQVLDTVVDAECVSEPVLLAAWYERRDGGSEVPAPFWGPDGAPPQRGNVTNGTLVLREARVGDSGMHVLSVFHPPNATAARHVVFLKVAPRRPEPAGGTPPPRDDEEGGTEEPATPAPPPHPHPIAEVAHVRGVTVSLRTQTAILFAPGDTVHTDVSVMPIAHDDDPYVMEVVWVRFDVPEECGEMRIYEPCLYHPQLPECRSPADAPCAASVWTERLAVRRYGPCSRGVPPPRCPSDAAMESRAGLGWYGHTVNLQLRDASEASGGLYVCVVYVNGHVHAWGHVVISTASRYRNAVVERSPPRYRPPPVEPTPSAQPTGPRPAAPRAARLVGVLGAAVGLAVAGLSVWACVTCRRARAWRAVKRRDLMAPTYIRLADDELYGDLSSYGDSDDSEYDSDSDRLPGTDPAPKRGSGFQILSGAKADPWSAGARQHGHLITFRADDTSRYRDPSSPDPPHRR.

The signal sequence occupies residues 1 to 24 (MRPPVRASLGLLVAWAIGACVCAA). The Virion surface segment spans residues 25–410 (AIETTWKHAS…RPAAPRAARL (386 aa)). Positions 66 to 91 (CGSLRPSWVSLRPPGQVLDTVVDAEC) are interaction with gI. A disordered region spans residues 168 to 203 (APRRPEPAGGTPPPRDDEEGGTEEPATPAPPPHPHP). 3 disulfides stabilise this stretch: Cys262–Cys288, Cys271–Cys280, and Cys305–Cys314. Residues 378 to 404 (ERSPPRYRPPPVEPTPSAQPTGPRPAA) form a disordered region. Residues 411-431 (VGVLGAAVGLAVAGLSVWACV) form a helical membrane-spanning segment. Residues 432–539 (TCRRARAWRA…PSSPDPPHRR (108 aa)) are Intravirion-facing. An Internalization motif motif is present at residues 452-455 (YIRL). Disordered regions lie at residues 466-497 (SYGD…GFQI) and 517-539 (ITFR…PHRR). The segment at 468–480 (GDSDDSEYDSDSD) is acidic. Over residues 520–531 (RADDTSRYRDPS) the composition is skewed to basic and acidic residues.

It belongs to the alphaherpesvirinae glycoprotein E family. As to quaternary structure, interacts with gI. Phosphorylated on serines within the acidic cluster. Phosphorylation determines whether endocytosed viral gE traffics to the trans-Golgi network or recycles to the cell membrane.

It is found in the virion membrane. Its subcellular location is the host cell membrane. The protein resides in the host cell junction. It localises to the host Golgi apparatus membrane. The protein localises to the host endosome membrane. In terms of biological role, in epithelial cells, the heterodimer gE/gI is required for the cell-to-cell spread of the virus, by sorting nascent virions to cell junctions. Once the virus reaches the cell junctions, virus particles can spread to adjacent cells extremely rapidly through interactions with cellular receptors that accumulate at these junctions. Implicated in basolateral spread in polarized cells. In neuronal cells, gE/gI is essential for the anterograde spread of the infection throughout the host nervous system. Together with US9, the heterodimer gE/gI is involved in the sorting and transport of viral structural components toward axon tips. The polypeptide is Envelope glycoprotein E (gE) (Macaca fascicularis (Crab-eating macaque)).